Reading from the N-terminus, the 460-residue chain is UDP-glucuronate 4-epimerase 6 (460 aa).

The next 2 helical transmembrane spans lie at 41–61 and 111–131; these read ATLL…PPLS and GLSV…SLAL. 113 to 144 contributes to the NAD(+) binding site; the sequence is SVLVTGAAGFVGSHCSLALRKRGDGVLGFDNF. Tyrosine 263 acts as the Proton acceptor in catalysis.

Belongs to the NAD(P)-dependent epimerase/dehydratase family. Homodimer. As to expression, in roots, leaf veins, siliques, flowers, pollen and stems.

It localises to the golgi apparatus. The protein localises to the golgi stack membrane. The catalysed reaction is UDP-alpha-D-glucuronate = UDP-alpha-D-galacturonate. Involved in the synthesis of the negatively charged monosaccharide that forms the backbone of pectic cell wall components. This Arabidopsis thaliana (Mouse-ear cress) protein is UDP-glucuronate 4-epimerase 6 (GAE6).